A 228-amino-acid polypeptide reads, in one-letter code: MKYLNQQEAISIDEELFNEYKFSVDQLMELAGLSCAHVIADAYAPESNKILICCGPGNNGGDGLVAARHLALMNYNPYVYYPKRTEKELFRNLQHQAESMGITVTTDCPDGASVEQEFGLIVDALFGFSFKPPVRDSFLPIMNVLQRSKLPIVSIDIPSGWNVEEGPQNECDIQPACLISLTAPKLCAKRLLNAQHYLGGRFVPKRLEEKYSLELPSYLGSNLFVKLN.

The region spanning 9 to 215 (AISIDEELFN…RLEEKYSLEL (207 aa)) is the YjeF N-terminal domain. Position 58–62 (58–62 (NNGGD)) interacts with (6S)-NADPHX. Asn59 and Asp123 together coordinate K(+). (6S)-NADPHX is bound by residues 127 to 133 (GFSFKPP) and Asp156. Ser159 lines the K(+) pocket.

This sequence belongs to the NnrE/AIBP family. It depends on K(+) as a cofactor.

The enzyme catalyses (6R)-NADHX = (6S)-NADHX. The catalysed reaction is (6R)-NADPHX = (6S)-NADPHX. In terms of biological role, catalyzes the epimerization of the S- and R-forms of NAD(P)HX, a damaged form of NAD(P)H that is a result of enzymatic or heat-dependent hydration. This is a prerequisite for the S-specific NAD(P)H-hydrate dehydratase to allow the repair of both epimers of NAD(P)HX. The chain is NAD(P)H-hydrate epimerase from Anopheles darlingi (Mosquito).